Reading from the N-terminus, the 156-residue chain is Small ribosomal subunit protein uS7 (156 aa).

The protein belongs to the universal ribosomal protein uS7 family. As to quaternary structure, part of the 30S ribosomal subunit. Contacts proteins S9 and S11.

Its function is as follows. One of the primary rRNA binding proteins, it binds directly to 16S rRNA where it nucleates assembly of the head domain of the 30S subunit. Is located at the subunit interface close to the decoding center, probably blocks exit of the E-site tRNA. The sequence is that of Small ribosomal subunit protein uS7 from Streptococcus pyogenes serotype M3 (strain ATCC BAA-595 / MGAS315).